The following is a 209-amino-acid chain: 3-demethoxyubiquinol 3-hydroxylase (209 aa).

Fe cation contacts are provided by Glu58, Glu88, His91, Glu140, Glu172, and His175.

The protein belongs to the COQ7 family. Fe cation is required as a cofactor.

It localises to the cell membrane. The catalysed reaction is a 5-methoxy-2-methyl-3-(all-trans-polyprenyl)benzene-1,4-diol + AH2 + O2 = a 3-demethylubiquinol + A + H2O. It participates in cofactor biosynthesis; ubiquinone biosynthesis. In terms of biological role, catalyzes the hydroxylation of 2-nonaprenyl-3-methyl-6-methoxy-1,4-benzoquinol during ubiquinone biosynthesis. This chain is 3-demethoxyubiquinol 3-hydroxylase, found in Polynucleobacter asymbioticus (strain DSM 18221 / CIP 109841 / QLW-P1DMWA-1) (Polynucleobacter necessarius subsp. asymbioticus).